A 216-amino-acid polypeptide reads, in one-letter code: Somatotropin (216 aa).

The N-terminal stretch at 1 to 26 (MAAGPRNSVLLAFALLCLPWPQEVGT) is a signal peptide. His45 contacts Zn(2+). Cys78 and Cys189 are oxidised to a cystine. At Ser131 the chain carries Phosphoserine. Position 198 (Glu198) interacts with Zn(2+). A disulfide bridge connects residues Cys206 and Cys214.

The protein belongs to the somatotropin/prolactin family.

It is found in the secreted. Functionally, plays an important role in growth control. Its major role in stimulating body growth is to stimulate the liver and other tissues to secrete IGF1. It stimulates both the differentiation and proliferation of myoblasts. It also stimulates amino acid uptake and protein synthesis in muscle and other tissues. The sequence is that of Somatotropin (GH1) from Felis catus (Cat).